A 195-amino-acid polypeptide reads, in one-letter code: Probable septum site-determining protein MinC (195 aa).

The protein belongs to the MinC family. Interacts with MinD and FtsZ.

Functionally, cell division inhibitor that blocks the formation of polar Z ring septums. Rapidly oscillates between the poles of the cell to destabilize FtsZ filaments that have formed before they mature into polar Z rings. Prevents FtsZ polymerization. The polypeptide is Probable septum site-determining protein MinC (Helicobacter pylori (strain P12)).